We begin with the raw amino-acid sequence, 109 residues long: Hainantoxin-XVIII (109 aa).

The signal sequence occupies residues 1–18 (MKLSIIIIATSLVIAVVA). The propeptide occupies 19–46 (FPSKDSKAIENDKTEQRMEIVVQETARA). 4 cysteine pairs are disulfide-bonded: C47–C62, C55–C68, C59–C108, and C61–C81.

It belongs to the neurotoxin 25 family. F7 subfamily. Expressed by the venom gland.

It localises to the secreted. Functionally, putative ion channel inhibitor. The polypeptide is Hainantoxin-XVIII (Cyriopagopus hainanus (Chinese bird spider)).